Here is a 225-residue protein sequence, read N- to C-terminus: Endonuclease V (225 aa).

Aspartate 43 and aspartate 110 together coordinate Mg(2+).

This sequence belongs to the endonuclease V family. Mg(2+) is required as a cofactor.

Its subcellular location is the cytoplasm. The catalysed reaction is Endonucleolytic cleavage at apurinic or apyrimidinic sites to products with a 5'-phosphate.. DNA repair enzyme involved in the repair of deaminated bases. Selectively cleaves double-stranded DNA at the second phosphodiester bond 3' to a deoxyinosine leaving behind the intact lesion on the nicked DNA. This Thermotoga petrophila (strain ATCC BAA-488 / DSM 13995 / JCM 10881 / RKU-1) protein is Endonuclease V.